The following is a 564-amino-acid chain: Solute carrier family 22 member 21 (564 aa).

Residues 1 to 20 (MLDYDEVTAFLGEWGTFQRL) are Cytoplasmic-facing. Residues 21–41 (IFFLLSASIIPNGFTGLSAVF) traverse the membrane as a helical segment. Topologically, residues 42–142 (LTAIPEHRCR…DLVCKDDWKA (101 aa)) are extracellular. Residues asparagine 57, asparagine 64, and asparagine 91 are each glycosylated (N-linked (GlcNAc...) asparagine). The helical transmembrane segment at 143 to 163 (PLTTSFFYVGVLLGSFISGQL) threads the bilayer. Residues 164–172 (SDRFGRKNI) are Cytoplasmic-facing. The chain crosses the membrane as a helical span at residues 173–193 (LFLTMAMHTGFSFIQVFSVNF). The Extracellular portion of the chain corresponds to 194–197 (EMFT). A helical transmembrane segment spans residues 198–218 (LLYTLVGMGHISNYVAAFVLG). 218–225 (GTEMLSKS) is a binding site for ATP. The Cytoplasmic portion of the chain corresponds to 219–232 (TEMLSKSVRIIFAT). The helical transmembrane segment at 233–253 (LGVCIFFAFGFMVLPLFAYFI) threads the bilayer. Topologically, residues 254–257 (REWR) are extracellular. The helical transmembrane segment at 258–278 (RLLLAITLPGVLCGALWWFIP) threads the bilayer. The Cytoplasmic portion of the chain corresponds to 279 to 344 (ESPRWLISQG…YDLVRTPNIR (66 aa)). Residues 345-365 (ILTIMSIILWLTISVGYFGLS) traverse the membrane as a helical segment. Topologically, residues 366–376 (LDTPNLNGNIY) are extracellular. Residues 377–397 (VNCFLLAAVEVPAYVLAWLLL) traverse the membrane as a helical segment. Residues 398 to 409 (QHVSRRYSMAGS) are Cytoplasmic-facing. Residues 410-430 (LFLGGSVLLLVQLVPSDLHYL) form a helical membrane-spanning segment. The Extracellular segment spans residues 431–433 (STT). A helical membrane pass occupies residues 434–454 (LVMVGKFGITSAYSMVYVYTA). Over 455–465 (ELYPTVVRNMG) the chain is Cytoplasmic. Residues 466-486 (VGVSSTASRLGSILSPYFVYL) form a helical membrane-spanning segment. Topologically, residues 487–491 (GAYDR) are extracellular. Residues 492–512 (RLPYILMGSLTILTAIITLFF) form a helical membrane-spanning segment. The Cytoplasmic portion of the chain corresponds to 513 to 564 (PESSGVSLPETIDEMQKVKKLKQRQSLSKKGSPKESKGNVSRTSRTSEPKGF). The interval 532–564 (KLKQRQSLSKKGSPKESKGNVSRTSRTSEPKGF) is disordered.

It belongs to the major facilitator (TC 2.A.1) superfamily. Organic cation transporter (TC 2.A.1.19) family. In terms of tissue distribution, predominantly expressed in testis.

Its subcellular location is the peroxisome membrane. Sodium-ion independent, medium affinity carnitine transporter. Also transports organic cations such as tetraethylammonium (TEA) without the involvement of sodium. Relative uptake activity ratio of carnitine to TEA is 746. In Mus musculus (Mouse), this protein is Solute carrier family 22 member 21 (Slc22a21).